Consider the following 2025-residue polypeptide: E3 ubiquitin-protein ligase TRIP12 (2025 aa).

The segment covering 1-10 (MSNRPNNNPG) has biased composition (polar residues). The segment at 1 to 404 (MSNRPNNNPG…SGESESDDSE (404 aa)) is disordered. Ser2 carries the post-translational modification N-acetylserine. Ser12 carries the post-translational modification Phosphoserine. A compositionally biased stretch (polar residues) spans 18–27 (RNTAGAQPQD). Over residues 48 to 70 (DPDRANTSERQKTGQVPKKDNSR) the composition is skewed to basic and acidic residues. A phosphoserine mark is found at Ser77, Ser85, and Ser100. Polar residues predominate over residues 78–88 (PDYNRTNSPSS). Polar residues predominate over residues 119 to 132 (EQQLKSAQLPSTSK). Composition is skewed to low complexity over residues 154–166 (SSCVKSGSGSEST) and 177–215 (KLASKSATSAKAGCSTITDSSSAASTSSSSSAIASASST). At Lys181 the chain carries N6-acetyllysine. Over residues 280 to 290 (PGSSKSETSKP) the composition is skewed to polar residues. Phosphoserine occurs at positions 310 and 312. Residues 326–338 (QKTTGSCASTSRR) show a composition bias toward polar residues. Over residues 346–358 (GAAEARRQEKMAD) the composition is skewed to basic and acidic residues. The segment covering 360–371 (ESNQETVNSSAA) has biased composition (polar residues). Over residues 379–397 (GAAASSSVAGAVGMTTSGE) the composition is skewed to low complexity. In terms of domain architecture, WWE spans 755–869 (MLKKGNAQNT…DPELAKSFIK (115 aa)). The disordered stretch occupies residues 970–1077 (ESLLTSPPKA…QSPKSSFLAS (108 aa)). Ser975 is modified (phosphoserine). A compositionally biased stretch (low complexity) spans 983 to 1006 (GSGSLGSTTPASSGTATAATNASA). A phosphoserine mark is found at Ser1024 and Ser1030. Residues 1034–1047 (KRKRLPKRGPRRPK) are compositionally biased toward basic residues. Ser1049 is subject to Phosphoserine. Residues 1050-1059 (PPRDDDKVDN) are compositionally biased toward basic and acidic residues. The span at 1062–1073 (KSPTTTQSPKSS) shows a compositional bias: low complexity. Phosphoserine is present on residues Ser1063, Ser1350, Ser1355, Ser1362, and Ser1409. Thr1410 is modified (phosphothreonine). Disordered regions lie at residues 1441-1466 (TKDCVGGKRGRAQTAPTKTSPRNAKK) and 1601-1620 (TNPEINQSDSQDSRVAPRLD). Lys1458 bears the N6-acetyllysine mark. Ser1460 is modified (phosphoserine). The segment at 1529-1603 (EIIPTSEFIN…AMQRLLDTNP (75 aa)) is K-box. Residues 1918–2025 (PDHGYTHDSR…REGQQSFHLS (108 aa)) enclose the HECT domain. Cys1992 functions as the Glycyl thioester intermediate in the catalytic mechanism.

The protein belongs to the UPL family. K-HECT subfamily. As to quaternary structure, interacts with MYC; leading to disrupt interaction with isoform p19ARF/ARF of CDKN2A. Interacts with TRADD; leading to disrupt interaction with isoform p19ARF/ARF of CDKN2A. Interacts with SMARCC1; leading to disrupt interaction with SMARCE1.

Its subcellular location is the nucleus. It localises to the nucleoplasm. It catalyses the reaction S-ubiquitinyl-[E2 ubiquitin-conjugating enzyme]-L-cysteine + [acceptor protein]-L-lysine = [E2 ubiquitin-conjugating enzyme]-L-cysteine + N(6)-ubiquitinyl-[acceptor protein]-L-lysine.. It participates in protein modification; protein ubiquitination. Its function is as follows. E3 ubiquitin-protein ligase involved in ubiquitin fusion degradation (UFD) pathway and regulation of DNA repair. Part of the ubiquitin fusion degradation (UFD) pathway, a process that mediates ubiquitination of protein at their N-terminus, regardless of the presence of lysine residues in target proteins. Acts as a key regulator of DNA damage response by acting as a suppressor of RNF168, an E3 ubiquitin-protein ligase that promotes accumulation of 'Lys-63'-linked histone H2A and H2AX at DNA damage sites, thereby acting as a guard against excessive spreading of ubiquitinated chromatin at damaged chromosomes. In normal cells, mediates ubiquitination and degradation of isoform p19ARF/ARF of CDKN2A, a lysine-less tumor suppressor required for p53/TP53 activation under oncogenic stress. In cancer cells, however, isoform p19ARF/ARF and TRIP12 are located in different cell compartments, preventing isoform p19ARF/ARF ubiquitination and degradation. Does not mediate ubiquitination of isoform p16-INK4a of CDKN2A. Also catalyzes ubiquitination of NAE1 and SMARCE1, leading to their degradation. Ubiquitination and degradation of target proteins is regulated by interaction with proteins such as MYC, TRADD or SMARCC1, which disrupt the interaction between TRIP12 and target proteins. Mediates ubiquitination of ASXL1: following binding to N(6)-methyladenosine methylated DNA, ASXL1 is ubiquitinated by TRIP12, leading to its degradation and subsequent inactivation of the PR-DUB complex. The chain is E3 ubiquitin-protein ligase TRIP12 (Trip12) from Mus musculus (Mouse).